The primary structure comprises 362 residues: MTTPLTLENISQAPKALLHDHLDGGLRPSTVLELAGQYGYDDLPADDVDELATFFRTAAHSGSLVRYLEPFAHTVGVMQTAEALHRVAFECVEDLAGDNVVYAEVRFAPELHIEGGMGLDAVVDAVLAGFADGEKAAASAGRTITVRCLVTAMRHAARSREIAELAIRFRDRGVVGFDIAGAEAGYPPTRHLDAFEYMRGNNARFTIHAGEAFGLPSIHEAIAFCGADRLGHGVRIVDDITVAPDGQVKLGRLAAILRDKRIPLELCPSSNVQTGAVASIAEHPFDLLARTRFRVTVNTDNRLMSDTSMSQEMLRLVEAFGYGWSDLARFTINAMKSSFIPFDERLALIDDVIKPRYAVLAG.

2 residues coordinate Zn(2+): His19 and His21. Substrate contacts are provided by His21, Asp23, and Gly181. His208 provides a ligand contact to Zn(2+). The active-site Proton donor is Glu211. Asp300 is a binding site for Zn(2+).

The protein belongs to the metallo-dependent hydrolases superfamily. Adenosine and AMP deaminases family. Adenosine deaminase subfamily. Requires Zn(2+) as cofactor.

It catalyses the reaction adenosine + H2O + H(+) = inosine + NH4(+). The catalysed reaction is 2'-deoxyadenosine + H2O + H(+) = 2'-deoxyinosine + NH4(+). Catalyzes the hydrolytic deamination of adenosine and 2-deoxyadenosine. The protein is Adenosine deaminase of Mycobacterium sp. (strain MCS).